The sequence spans 214 residues: Large ribosomal subunit protein uL1 (214 aa).

This sequence belongs to the universal ribosomal protein uL1 family. In terms of assembly, part of the 50S ribosomal subunit.

Its function is as follows. Binds directly to 23S rRNA. Probably involved in E site tRNA release. Functionally, protein L1 is also a translational repressor protein, it controls the translation of its operon by binding to its mRNA. In Methanoregula boonei (strain DSM 21154 / JCM 14090 / 6A8), this protein is Large ribosomal subunit protein uL1.